A 262-amino-acid chain; its full sequence is Ninja-family protein 2 (262 aa).

The tract at residues arginine 49–alanine 70 is disordered.

Belongs to the Ninja family.

The protein localises to the nucleus. This Zea mays (Maize) protein is Ninja-family protein 2.